The primary structure comprises 427 residues: Glutamate-1-semialdehyde 2,1-aminomutase 1 (427 aa).

The residue at position 267 (K267) is an N6-(pyridoxal phosphate)lysine.

The protein belongs to the class-III pyridoxal-phosphate-dependent aminotransferase family. HemL subfamily. As to quaternary structure, homodimer. It depends on pyridoxal 5'-phosphate as a cofactor.

The protein resides in the cytoplasm. It catalyses the reaction (S)-4-amino-5-oxopentanoate = 5-aminolevulinate. The protein operates within porphyrin-containing compound metabolism; protoporphyrin-IX biosynthesis; 5-aminolevulinate from L-glutamyl-tRNA(Glu): step 2/2. The protein is Glutamate-1-semialdehyde 2,1-aminomutase 1 of Staphylococcus epidermidis (strain ATCC 35984 / DSM 28319 / BCRC 17069 / CCUG 31568 / BM 3577 / RP62A).